Here is a 406-residue protein sequence, read N- to C-terminus: Argininosuccinate synthase (406 aa).

Residues 12 to 20 (AYSGGLDTS) and Ala-39 contribute to the ATP site. L-citrulline is bound by residues Tyr-90 and Ser-95. Gly-120 is a binding site for ATP. L-aspartate is bound by residues Thr-122, Asn-126, and Asp-127. Asn-126 serves as a coordination point for L-citrulline. Residues Arg-130, Ser-179, Ser-188, Glu-264, and Tyr-276 each coordinate L-citrulline.

Belongs to the argininosuccinate synthase family. Type 1 subfamily. Homotetramer.

Its subcellular location is the cytoplasm. It carries out the reaction L-citrulline + L-aspartate + ATP = 2-(N(omega)-L-arginino)succinate + AMP + diphosphate + H(+). Its pathway is amino-acid biosynthesis; L-arginine biosynthesis; L-arginine from L-ornithine and carbamoyl phosphate: step 2/3. The protein is Argininosuccinate synthase of Geotalea uraniireducens (strain Rf4) (Geobacter uraniireducens).